A 147-amino-acid polypeptide reads, in one-letter code: Sentan (147 aa).

Residues 14 to 34 (RLEGEPNPPAAPTSTLAPKNM) form a disordered region. Residues 25 to 34 (PTSTLAPKNM) are compositionally biased toward polar residues.

It belongs to the S-100 family.

It is found in the cell projection. Its subcellular location is the cilium. In terms of biological role, may be a component of the linker structure that bridges the ciliary membrane and peripheral singlet microtubules. This chain is Sentan (SNTN), found in Bos taurus (Bovine).